Consider the following 239-residue polypeptide: Ribonuclease PH (239 aa).

Residues Arg87 and Gly125–Arg127 each bind phosphate.

Belongs to the RNase PH family. As to quaternary structure, homohexameric ring arranged as a trimer of dimers.

It catalyses the reaction tRNA(n+1) + phosphate = tRNA(n) + a ribonucleoside 5'-diphosphate. Phosphorolytic 3'-5' exoribonuclease that plays an important role in tRNA 3'-end maturation. Removes nucleotide residues following the 3'-CCA terminus of tRNAs; can also add nucleotides to the ends of RNA molecules by using nucleoside diphosphates as substrates, but this may not be physiologically important. Probably plays a role in initiation of 16S rRNA degradation (leading to ribosome degradation) during starvation. This Pseudomonas aeruginosa (strain LESB58) protein is Ribonuclease PH.